Consider the following 135-residue polypeptide: MARILALDYGTKRTGVAVTDELKMIASGLTTVQTPELIKFLEDYFKNEKVERVLVGEPKRMDDTPSQSEVHIQEFLKEFVKKFPEMPMERVDERFTSKMAVQSMIDGGLKKKKRRDKALVDEISATIILQTWLYE.

This sequence belongs to the YqgF nuclease family.

It localises to the cytoplasm. Functionally, could be a nuclease involved in processing of the 5'-end of pre-16S rRNA. The chain is Putative pre-16S rRNA nuclease from Christiangramia forsetii (strain DSM 17595 / CGMCC 1.15422 / KT0803) (Gramella forsetii).